We begin with the raw amino-acid sequence, 248 residues long: Tetraspanin-18 (248 aa).

Topologically, residues 1–13 (MEGDCLSCMKYLM) are cytoplasmic. The chain crosses the membrane as a helical span at residues 14–34 (FVFNFFIFLGGACLLAIGIWV). Residues 35–49 (MVDPTGFREIVAANP) lie on the Extracellular side of the membrane. Residues 50 to 70 (LLLTGAYILLAMGGLLFLLGF) traverse the membrane as a helical segment. Residues 71–83 (LGCCGAVRENKCL) lie on the Cytoplasmic side of the membrane. A helical membrane pass occupies residues 84–104 (LLFFFLFILIIFLAELSAAIL). Topologically, residues 105-223 (AFIFRENLTR…TFETYVYLAG (119 aa)) are extracellular. 2 N-linked (GlcNAc...) asparagine glycosylation sites follow: Asn111 and Asn129. Residues 224-244 (ALAIGVLAIELFAMIFAMCLF) traverse the membrane as a helical segment. Topologically, residues 245–248 (RGIQ) are cytoplasmic.

It belongs to the tetraspanin (TM4SF) family. Interacts with ORAI1; this interaction regulates ORAI1 exit from the endoplasmic (ER), and/or Golgi, and trafficking to the cell surface. Highly expressed in primary endothelial cells. Expressed in the embryo heart. Weakly expressed the embryo skeletal muscle.

It localises to the membrane. Plays a role in the cell surface localization of ORAI1 and may participate in the regulation of Ca(2+) signaling and the VWF release in response to inflammatory stimuli. This Homo sapiens (Human) protein is Tetraspanin-18.